We begin with the raw amino-acid sequence, 348 residues long: Nicotinate-nucleotide--dimethylbenzimidazole phosphoribosyltransferase (348 aa).

Catalysis depends on glutamate 315, which acts as the Proton acceptor.

It belongs to the CobT family.

The enzyme catalyses 5,6-dimethylbenzimidazole + nicotinate beta-D-ribonucleotide = alpha-ribazole 5'-phosphate + nicotinate + H(+). It functions in the pathway nucleoside biosynthesis; alpha-ribazole biosynthesis; alpha-ribazole from 5,6-dimethylbenzimidazole: step 1/2. Catalyzes the synthesis of alpha-ribazole-5'-phosphate from nicotinate mononucleotide (NAMN) and 5,6-dimethylbenzimidazole (DMB). The chain is Nicotinate-nucleotide--dimethylbenzimidazole phosphoribosyltransferase from Dechloromonas aromatica (strain RCB).